We begin with the raw amino-acid sequence, 174 residues long: NADH-quinone oxidoreductase subunit I (174 aa).

4Fe-4S ferredoxin-type domains lie at 44–74 and 90–119; these read LNRY…VEGD and RVYQ…MTND. [4Fe-4S] cluster-binding residues include Cys-54, Cys-57, Cys-60, Cys-64, Cys-99, Cys-102, Cys-105, and Cys-109.

Belongs to the complex I 23 kDa subunit family. In terms of assembly, NDH-1 is composed of 14 different subunits. Subunits NuoA, H, J, K, L, M, N constitute the membrane sector of the complex. The cofactor is [4Fe-4S] cluster.

The protein localises to the cell membrane. It catalyses the reaction a quinone + NADH + 5 H(+)(in) = a quinol + NAD(+) + 4 H(+)(out). NDH-1 shuttles electrons from NADH, via FMN and iron-sulfur (Fe-S) centers, to quinones in the respiratory chain. The immediate electron acceptor for the enzyme in this species is believed to be menaquinone. Couples the redox reaction to proton translocation (for every two electrons transferred, four hydrogen ions are translocated across the cytoplasmic membrane), and thus conserves the redox energy in a proton gradient. The sequence is that of NADH-quinone oxidoreductase subunit I from Mycobacterium sp. (strain JLS).